Here is a 380-residue protein sequence, read N- to C-terminus: Putative T-box protein 40 (380 aa).

The segment at residues 11–192 (MAEEDRWLTQ…KNATFENRLD (182 aa)) is a DNA-binding region (T-box). The disordered stretch occupies residues 188-215 (ENRLDGGNKRKNTNSREEPSSKRSKNET). Over residues 189–215 (NRLDGGNKRKNTNSREEPSSKRSKNET) the composition is skewed to basic and acidic residues.

The protein localises to the nucleus. This Caenorhabditis elegans protein is Putative T-box protein 40 (tbx-40).